The primary structure comprises 706 residues: Methionine--tRNA ligase (706 aa).

The short motif at P13–H23 is the 'HIGH' region element. Residues C144, C147, C157, and C160 each coordinate Zn(2+). A 'KMSKS' region motif is present at residues K336–S340. K339 contributes to the ATP binding site. A disordered region spans residues Q570 to V593. The region spanning D604 to K706 is the tRNA-binding domain.

Belongs to the class-I aminoacyl-tRNA synthetase family. MetG type 1 subfamily. In terms of assembly, homodimer. Zn(2+) serves as cofactor.

It is found in the cytoplasm. The enzyme catalyses tRNA(Met) + L-methionine + ATP = L-methionyl-tRNA(Met) + AMP + diphosphate. Is required not only for elongation of protein synthesis but also for the initiation of all mRNA translation through initiator tRNA(fMet) aminoacylation. The protein is Methionine--tRNA ligase of Nitrosomonas europaea (strain ATCC 19718 / CIP 103999 / KCTC 2705 / NBRC 14298).